A 454-amino-acid chain; its full sequence is Putative serine/threonine-protein phosphatase C27B7.6 (454 aa).

Mn(2+)-binding residues include D65, H67, D93, and N125. Catalysis depends on H126, which acts as the Proton donor. Positions 174 and 252 each coordinate Mn(2+). The disordered stretch occupies residues 414-454 (RKKLGMTTSTTPPPPRTPSPDAPLAQSPPIPRSPPSSTENA). The segment covering 424–447 (TPPPPRTPSPDAPLAQSPPIPRSP) has biased composition (pro residues).

This sequence belongs to the PPP phosphatase family. PP-1 subfamily. It depends on Mn(2+) as a cofactor.

The catalysed reaction is O-phospho-L-seryl-[protein] + H2O = L-seryl-[protein] + phosphate. It catalyses the reaction O-phospho-L-threonyl-[protein] + H2O = L-threonyl-[protein] + phosphate. This Caenorhabditis elegans protein is Putative serine/threonine-protein phosphatase C27B7.6.